We begin with the raw amino-acid sequence, 518 residues long: Lysine--tRNA ligase (518 aa).

The disordered stretch occupies residues 1 to 28 (MTEPTQPNAAQPDAARPNVAPEMDDNKI). Mg(2+) contacts are provided by E428 and E435.

Belongs to the class-II aminoacyl-tRNA synthetase family. In terms of assembly, homodimer. Mg(2+) is required as a cofactor.

It localises to the cytoplasm. It catalyses the reaction tRNA(Lys) + L-lysine + ATP = L-lysyl-tRNA(Lys) + AMP + diphosphate. The chain is Lysine--tRNA ligase from Paraburkholderia phytofirmans (strain DSM 17436 / LMG 22146 / PsJN) (Burkholderia phytofirmans).